The following is a 360-amino-acid chain: G-protein coupled receptor 15 (360 aa).

At 1 to 33 the chain is on the extracellular side; that stretch reads MDPEETSVYLDYYYATSPNPDIRETHSHVPYTS. Residues 34-54 traverse the membrane as a helical segment; that stretch reads VFLPVFYTAVFLTGVLGNLVL. At 55–69 the chain is on the cytoplasmic side; it reads MGALHFKPGSRRLID. A helical transmembrane segment spans residues 70–90; that stretch reads IFIINLAASDFIFLVTLPLWV. The Extracellular portion of the chain corresponds to 91 to 120; it reads DKEASLGLWRTGSFLCKGSSYMISVNMHCS. Residues 121 to 141 form a helical membrane-spanning segment; sequence VFLLTCMSVDRYLAIVCPVVS. At 142–149 the chain is on the cytoplasmic side; it reads RKFRRTDC. A helical transmembrane segment spans residues 150–170; sequence AYVVCASIWFISCLLGLPTLL. The Extracellular portion of the chain corresponds to 171–192; sequence SRELTLIDDKPYCAEKKATPLK. The chain crosses the membrane as a helical span at residues 193-213; sequence LIWSLVALIFTFFVPLLSIVT. Residues 214-239 are Cytoplasmic-facing; it reads CYCCIARKLCAHYQQSGKHNKKLKKS. A helical membrane pass occupies residues 240–260; sequence IKIIFIVVAAFLVSWLPFNTS. Residues 261–284 are Extracellular-facing; the sequence is KLLAIVSGLQQERYFPSAILQLGM. The helical transmembrane segment at 285–305 threads the bilayer; that stretch reads EVSGPLAFANSCVNPFIYYIF. At 306–360 the chain is on the cytoplasmic side; the sequence is DSYIRRAIVHCLCPCLKNYDFGSSTETSDSHLTKALSTFIHAEDFTRRRKRSVSL. Ser-359 is subject to Phosphoserine.

Belongs to the G-protein coupled receptor 1 family. Interacts with adapter YWHAE; this interaction promotes ER-to-Golgi transport of GPR15. Post-translationally, phosphorylation is necessary for YWHAE binding and efficient surface expression. In terms of processing, O-glycosylated. Sialylated O-glycans in the N-terminal tail inhibits binding of GPR15LG. Sulfation is required for efficient binding of GPR15LG.

It is found in the cell membrane. G protein-coupled receptor that plays an important role in immune homeostasis. Acts via its natural ligand GPR15LG, a chemokine-like polypeptide strongly expressed in gastrointestinal tissues. GPR15-GPR15LG signaling axis regulates intestinal homeostasis and inflammation through the migration of immune cells. Controls thereby the specific homing of T-cells, particularly FOXP3+ regulatory T-cells (Tregs), to the large intestine lamina propria. Also required for skin localization of thymus-derived dendritic epidermal T-cells. Plays an important role in mediating cytoprotective function as well as angiogenesis of thrombomodulin. Mechanistically, preferentially signals through the Gi/o pathway to inhibit adenylate cyclase activity and activate a phosphatidylinositol-calcium second messenger system that regulates the release of Ca(2+) ions from intracellular stores. The protein is G-protein coupled receptor 15 (GPR15) of Macaca nemestrina (Pig-tailed macaque).